A 180-amino-acid polypeptide reads, in one-letter code: MGIPVGKSMLVLLISLAFALCCIAAYGPGETLCGGELVDTLQFVCSDRGFYFSRPSSRANRRSRGIVEECCFRSCDLALLETYCATPAKSERDVSTSQAVLPDDFPRYPVGKFFQYDTWRQSAGRLRRGLPALLRARRGRMLAKELKEFREAKRHRPLIVLPPKDPAHGGASSEMSSNHQ.

A signal peptide spans 1 to 24 (MGIPVGKSMLVLLISLAFALCCIA). The interval 25–52 (AYGPGETLCGGELVDTLQFVCSDRGFYF) is b. 3 disulfides stabilise this stretch: C33–C71, C45–C84, and C70–C75. The c stretch occupies residues 53–64 (SRPSSRANRRSR). The tract at residues 65–85 (GIVEECCFRSCDLALLETYCA) is a. The segment at 86-91 (TPAKSE) is d. A propeptide spans 92–180 (RDVSTSQAVL…ASSEMSSNHQ (89 aa)) (e peptide). Residues 157 to 180 (PLIVLPPKDPAHGGASSEMSSNHQ) are disordered.

It belongs to the insulin family. As to quaternary structure, interacts with MYORG; this interaction is required for IGF2 secretion. Interacts with integrins ITGAV:ITGB3 and ITGA6:ITGB4; integrin-binding is required for IGF2 signaling. Interacts with IGFBP2. Post-translationally, proteolytically processed by PCSK4, proIGF2 is cleaved at Arg-128 and Arg-92 to generate big-IGF2 and mature IGF2. Expressed in the heart, blood serum, kidney and skeletal muscle including the tibialis anterior muscle.

It localises to the secreted. Its function is as follows. The insulin-like growth factors possess growth-promoting activity. Major fetal growth hormone in mammals. Plays a key role in regulating fetoplacental development. IGF2 is influenced by placental lactogen. Also involved in tissue differentiation. In adults, involved in glucose metabolism in adipose tissue, skeletal muscle and liver. Acts as a ligand for integrin which is required for IGF2 signaling. Positively regulates myogenic transcription factor MYOD1 function by facilitating the recruitment of transcriptional coactivators, thereby controlling muscle terminal differentiation. Inhibits myoblast differentiation and modulates metabolism via increasing the mitochondrial respiration rate. Preptin undergoes glucose-mediated co-secretion with insulin, and acts as a physiological amplifier of glucose-mediated insulin secretion. Exhibits osteogenic properties by increasing osteoblast mitogenic activity through phosphoactivation of MAPK1 and MAPK3. The protein is Insulin-like growth factor 2 of Mus musculus (Mouse).